The primary structure comprises 280 residues: Urease accessory protein UreD 1 (280 aa).

It belongs to the UreD family. In terms of assembly, ureD, UreF and UreG form a complex that acts as a GTP-hydrolysis-dependent molecular chaperone, activating the urease apoprotein by helping to assemble the nickel containing metallocenter of UreC. The UreE protein probably delivers the nickel.

It localises to the cytoplasm. Required for maturation of urease via the functional incorporation of the urease nickel metallocenter. The protein is Urease accessory protein UreD 1 of Bradyrhizobium sp. (strain BTAi1 / ATCC BAA-1182).